The primary structure comprises 331 residues: Probable protein phosphatase 2C 72 (331 aa).

Residues leucine 43–leucine 324 form the PPM-type phosphatase domain. The Mn(2+) site is built by aspartate 78, glycine 79, aspartate 268, and aspartate 315.

The protein belongs to the PP2C family. Mg(2+) is required as a cofactor. Mn(2+) serves as cofactor.

The enzyme catalyses O-phospho-L-seryl-[protein] + H2O = L-seryl-[protein] + phosphate. It carries out the reaction O-phospho-L-threonyl-[protein] + H2O = L-threonyl-[protein] + phosphate. This Arabidopsis thaliana (Mouse-ear cress) protein is Probable protein phosphatase 2C 72.